The chain runs to 315 residues: Adenine deaminase (315 aa).

Positions 14, 16, and 194 each coordinate Zn(2+). Glu197 (proton donor) is an active-site residue. Asp275 is a Zn(2+) binding site. Position 276 (Asp276) interacts with substrate.

Belongs to the metallo-dependent hydrolases superfamily. Adenosine and AMP deaminases family. Adenine deaminase type 2 subfamily. It depends on Zn(2+) as a cofactor.

It catalyses the reaction adenine + H2O + H(+) = hypoxanthine + NH4(+). Catalyzes the hydrolytic deamination of adenine to hypoxanthine. Plays an important role in the purine salvage pathway and in nitrogen catabolism. In Pseudomonas putida (strain ATCC 47054 / DSM 6125 / CFBP 8728 / NCIMB 11950 / KT2440), this protein is Adenine deaminase.